The following is a 323-amino-acid chain: uncharacterized protein (323 aa).

3 consecutive transmembrane segments (helical) span residues 8-28 (FLVI…MFME), 32-52 (LTLL…PFSL), and 92-112 (ITIF…CGIF).

The protein localises to the mitochondrion membrane. This is an uncharacterized protein from Neurospora crassa (strain ATCC 24698 / 74-OR23-1A / CBS 708.71 / DSM 1257 / FGSC 987).